Here is a 698-residue protein sequence, read N- to C-terminus: DNA ligase (698 aa).

NAD(+)-binding positions include 35 to 39, 84 to 85, and E123; these read DSVYD and SL. K125 serves as the catalytic N6-AMP-lysine intermediate. R146, E183, K302, and K326 together coordinate NAD(+). The Zn(2+) site is built by C420, C423, C438, and C443. The BRCT domain maps to 612 to 698; sequence NGKGHLNGQT…QNSADTIHLL (87 aa).

This sequence belongs to the NAD-dependent DNA ligase family. LigA subfamily. Mg(2+) serves as cofactor. It depends on Mn(2+) as a cofactor.

The enzyme catalyses NAD(+) + (deoxyribonucleotide)n-3'-hydroxyl + 5'-phospho-(deoxyribonucleotide)m = (deoxyribonucleotide)n+m + AMP + beta-nicotinamide D-nucleotide.. DNA ligase that catalyzes the formation of phosphodiester linkages between 5'-phosphoryl and 3'-hydroxyl groups in double-stranded DNA using NAD as a coenzyme and as the energy source for the reaction. It is essential for DNA replication and repair of damaged DNA. This is DNA ligase from Synechococcus sp. (strain WH7803).